The following is a 208-amino-acid chain: Ribosomal RNA small subunit methyltransferase G (208 aa).

S-adenosyl-L-methionine-binding positions include glycine 78, phenylalanine 83, 101 to 103 (ERS), 129 to 130 (IE), and arginine 142.

This sequence belongs to the methyltransferase superfamily. RNA methyltransferase RsmG family.

It localises to the cytoplasm. Functionally, specifically methylates the N7 position of a guanine in 16S rRNA. This chain is Ribosomal RNA small subunit methyltransferase G, found in Borreliella burgdorferi (strain ZS7) (Borrelia burgdorferi).